Here is an 855-residue protein sequence, read N- to C-terminus: tRNA(Met) cytidine acetyltransferase TmcA (855 aa).

Residues Gln-260, 286-295 (GRGKSALLGI), and Arg-438 each bind ATP. The region spanning 480 to 663 (PDLRYWFEDP…GEYSVAVIRP (184 aa)) is the N-acetyltransferase domain. Residues 590–592 (IAT), 597–603 (MRHGLGS), Glu-630, and Arg-637 contribute to the acetyl-CoA site.

The protein belongs to the RNA cytidine acetyltransferase family. TmcA subfamily.

It localises to the cytoplasm. The enzyme catalyses cytidine(34) in elongator tRNA(Met) + acetyl-CoA + ATP + H2O = N(4)-acetylcytidine(34) in elongator tRNA(Met) + ADP + phosphate + CoA + H(+). Catalyzes the formation of N(4)-acetylcytidine (ac(4)C) at the wobble position of tRNA(Met), by using acetyl-CoA as an acetyl donor and ATP (or GTP). This Methanopyrus kandleri (strain AV19 / DSM 6324 / JCM 9639 / NBRC 100938) protein is tRNA(Met) cytidine acetyltransferase TmcA.